The sequence spans 173 residues: MLKIKQEIYKNSLQVILKFFFALLCFCIILFPLLSYKINIQSRIFPAMEIIFIYYFMSLYSLNIFSIFFLGLLIDQISGMPIGTDSLVFVSANIIYKLSSKYFLAKNYLINFVVFCFYCLFILNFKYLLVTIKNLEVEGYLIIFFQSLTTIFSYNIIRLILDSPMDYFKKYAK.

4 helical membrane passes run 13–35 (LQVILKFFFALLCFCIILFPLLS), 50–72 (IIFIYYFMSLYSLNIFSIFFLGL), 107–129 (NYLINFVVFCFYCLFILNFKYLL), and 139–161 (GYLIIFFQSLTTIFSYNIIRLIL).

Its subcellular location is the cell membrane. This is an uncharacterized protein from Rickettsia prowazekii (strain Madrid E).